A 225-amino-acid polypeptide reads, in one-letter code: Ribonuclease 3 (225 aa).

The 127-residue stretch at 2–128 (LSTLIKKLKI…LFGAIYLDLG (127 aa)) folds into the RNase III domain. Glu-43 contributes to the Mg(2+) binding site. Asp-47 is an active-site residue. Mg(2+)-binding residues include Asn-114 and Glu-117. Glu-117 is a catalytic residue. In terms of domain architecture, DRBM spans 152–220 (DFKTQLQELV…ARYVLNILSK (69 aa)).

Belongs to the ribonuclease III family. In terms of assembly, homodimer. Mg(2+) is required as a cofactor.

It localises to the cytoplasm. It catalyses the reaction Endonucleolytic cleavage to 5'-phosphomonoester.. In terms of biological role, digests double-stranded RNA. Involved in the processing of primary rRNA transcript to yield the immediate precursors to the large and small rRNAs (23S and 16S). Processes some mRNAs, and tRNAs when they are encoded in the rRNA operon. Processes pre-crRNA and tracrRNA of type II CRISPR loci if present in the organism. This chain is Ribonuclease 3, found in Phytoplasma mali (strain AT).